Here is a 348-residue protein sequence, read N- to C-terminus: Galactose-1-phosphate uridylyltransferase (348 aa).

28–31 (RAKR) provides a ligand contact to UDP-alpha-D-glucose. Zn(2+) contacts are provided by cysteine 52 and cysteine 55. UDP-alpha-D-glucose-binding positions include valine 61 and 77–78 (ND). Histidine 115 serves as a coordination point for Zn(2+). UDP-alpha-D-glucose is bound by residues asparagine 153 and 159–161 (GCS). A Zn(2+)-binding site is contributed by histidine 164. Histidine 166 functions as the Tele-UMP-histidine intermediate in the catalytic mechanism. Glutamine 168 serves as a coordination point for UDP-alpha-D-glucose. 4 residues coordinate Fe cation: glutamate 182, histidine 281, histidine 296, and histidine 298. Residues 311-312 (KF), 316-317 (YE), and glutamine 323 contribute to the UDP-alpha-D-glucose site.

The protein belongs to the galactose-1-phosphate uridylyltransferase type 1 family. In terms of assembly, homodimer. Zn(2+) is required as a cofactor.

The enzyme catalyses alpha-D-galactose 1-phosphate + UDP-alpha-D-glucose = alpha-D-glucose 1-phosphate + UDP-alpha-D-galactose. Its pathway is carbohydrate metabolism; galactose metabolism. In Escherichia coli (strain K12), this protein is Galactose-1-phosphate uridylyltransferase (galT).